We begin with the raw amino-acid sequence, 165 residues long: GTP-dependent dephospho-CoA kinase (165 aa).

Residues aspartate 44, valine 45, aspartate 63, lysine 65, glutamate 115, and aspartate 138 each coordinate GTP.

It belongs to the GTP-dependent DPCK family.

It carries out the reaction 3'-dephospho-CoA + GTP = GDP + CoA + H(+). Its pathway is cofactor biosynthesis; coenzyme A biosynthesis. Functionally, catalyzes the GTP-dependent phosphorylation of the 3'-hydroxyl group of dephosphocoenzyme A to form coenzyme A (CoA). This Picrophilus torridus (strain ATCC 700027 / DSM 9790 / JCM 10055 / NBRC 100828 / KAW 2/3) protein is GTP-dependent dephospho-CoA kinase.